The sequence spans 138 residues: Thyrotropin subunit beta (138 aa).

The first 20 residues, 1-20 (MNAVVLFSVLFALACGQVSS), serve as a signal peptide directing secretion. Disulfide bonds link cysteine 22–cysteine 72, cysteine 36–cysteine 87, cysteine 39–cysteine 125, cysteine 47–cysteine 103, cysteine 51–cysteine 105, and cysteine 108–cysteine 115. A glycan (N-linked (GlcNAc...) asparagine) is linked at asparagine 43. Positions 133–138 (LGGFSG) are excised as a propeptide.

It belongs to the glycoprotein hormones subunit beta family. Heterodimer of a common alpha chain and a unique beta chain which confers biological specificity to thyrotropin, lutropin, follitropin and gonadotropin.

The protein resides in the secreted. In terms of biological role, indispensable for the control of thyroid structure and metabolism. In Rattus norvegicus (Rat), this protein is Thyrotropin subunit beta (Tshb).